The primary structure comprises 308 residues: Oligopeptide transport ATP-binding protein OppF (308 aa).

One can recognise an ABC transporter domain in the interval 9-254 (VEVKNVSLTF…PIHPYTQSLL (246 aa)). 46 to 53 (GESGSGKT) is an ATP binding site.

Belongs to the ABC transporter superfamily. The complex is composed of two ATP-binding proteins (OppD and OppF), two transmembrane proteins (OppB and OppC) and a solute-binding protein (OppA).

The protein localises to the cell membrane. The catalysed reaction is a [peptide](out) + ATP + H2O = a [peptide](in) + ADP + phosphate + H(+). Functionally, part of the ABC transporter complex OppABCDF involved in the uptake of oligopeptides. Probably responsible for energy coupling to the transport system. The protein is Oligopeptide transport ATP-binding protein OppF (oppF) of Streptococcus mutans serotype c (strain ATCC 700610 / UA159).